The primary structure comprises 20 residues: DELTA-actitoxin-Afr1b (20 aa).

Belongs to the actinoporin family. Sea anemone subfamily. As to quaternary structure, octamer or nonamer in membranes. Monomer in the soluble state.

The protein resides in the secreted. The protein localises to the nematocyst. Its subcellular location is the target cell membrane. Functionally, pore-forming toxin (PFT) that consists of a crown-shaped octamer or nonamer that forms cation-selective hydrophilic pores of about 1.5 nm (inside) and 13 nm (outside) and causes cytolysis. It causes cardiac stimulation. Also causes hemolysis (HC(50)=0.4 nM). Interestingly, the Phe-16 is crucial for hemolysis. Pore formation is a multi-step process that involves specific recognition of membrane sphingomyelin (but neither cholesterol nor phosphatidylcholine) using aromatic rich region and adjacent phosphocholine (POC) binding site, firm binding to the membrane (mainly driven by hydrophobic interactions) accompanied by the transfer of the N-terminal region to the lipid-water interface and finally pore formation after oligomerization of monomers. It is probable that a dimeric form is an assembly intermediate before the complete oligomerization. The formation of stable pores occurs only in vesicles composed of DOPC/SM (there is no oligomerization when the PFT is treated with vesicles of DOPC or SM alone). The transmembrane pore displays 8 lateral perforations, one at each subunit-subunit interface, partially occupied by the acyl-chain region of a bridging lipid. Each pore contains 24 lipid molecules, firmly bound to each subunit, that is, 3 lipids (L1, L2, L3, L4 and/or L5) are associated to each subunit. Lipid L1 bridges 2 subunits, whereas lipids L2 and L3 bind to sites at single subunit. This chain is DELTA-actitoxin-Afr1b, found in Actinia fragacea (Strawberry anemone).